An 883-amino-acid polypeptide reads, in one-letter code: Pre-mRNA-splicing factor syf1 homolog (883 aa).

HAT repeat units follow at residues 13–45 (INFE…HKAK), 46–78 (APNN…TRRK), 88–120 (PMYE…FMTS), 122–156 (CKIT…FVRR), 158–190 (EMPE…EADR), 268–303 (GLFD…FEEL), 368–406 (DKPA…FYEA), 463–495 (KRKI…LEES), 531–565 (NYFE…KFLE), 570–604 (TKLE…LEEE), 642–676 (YGLP…LETK), and 678–712 (GEVD…FEVR). Disordered stretches follow at residues 794–851 (RGET…DEEG) and 864–883 (IPAK…SDGE). The span at 812 to 834 (DEIDIGDSDEDDEEEDDDEENEM) shows a compositional bias: acidic residues. Composition is skewed to polar residues over residues 835 to 844 (TNENQASAAV) and 873 to 883 (KPSNQGDSDGE).

This sequence belongs to the crooked-neck family. As to quaternary structure, component of the NTC(Nineteen)/Prp19 complex composed of at least fand, Prp19,CG9667/ISY1 and Cdc5/CDC5L. Within the complex, interacts with Prp19 and ISY1/CG9667.

Its subcellular location is the nucleus. Functionally, subunit of the NTC(Nineteen)/Prp19 complex, which is part of the spliceosome. The complex participates in spliceosome assembly, its remodeling and is required for efficient spliceosome activation. Essential for efficient pre-mRNA splicing. In embryos, efficient pre-mRNA splicing of zygotic transcripts is essential during dynamic cellular processes that require rapid division and/or dramatic changes in gene expression such as blastoderm cellularization, tracheal branching morphogenesis, Malpighian morphogenesis and epidermal development. Part of its role in promoting embryo tracheal development is also due to specifically splicing bnl transcripts which results in the activation of the BNL-FGF pathway. The protein is Pre-mRNA-splicing factor syf1 homolog of Drosophila melanogaster (Fruit fly).